The following is a 153-amino-acid chain: Large ribosomal subunit protein uL30 (153 aa).

The protein belongs to the universal ribosomal protein uL30 family. As to quaternary structure, part of the 50S ribosomal subunit.

In Methanospirillum hungatei JF-1 (strain ATCC 27890 / DSM 864 / NBRC 100397 / JF-1), this protein is Large ribosomal subunit protein uL30.